The primary structure comprises 400 residues: MTDFRTLDDAGPLQGKRVLLRVDLNVPMEGGRVTDATRIERVVPTIREIADAGGRVILLAHFGRPKGKPDPKDSLKPILSTLSEKLGRPVAFGEDCVGEAAASAIAALKDGDVILLENTRYHAGEEKNDPDFAKALAANGDIYVNEAFSAAHRAHASTEALARLLPAYAGRLMQAELDALTKGLEAPARPVIAIVGGAKVSTKIDLLENLVAKVDMLVIGGGMANTFLHAQGKDVGKSLCEKDLAETAKRILAAAKEKNCTIILPVDALVAREFKANAENETVPVDAVPSDAMILDVGASSIATIDGAIEEARTLVWNGPLGAFELTPFDTGTVAVAQHAARRTKAGQLVSVAGGGDTVAALNHAGVGEDFSYVSTAGGAFLEWLEGKELPGVEALRAQG.

Substrate contacts are provided by residues 23-25, arginine 38, 61-64, arginine 120, and arginine 153; these read DLN and HFGR. Residues lysine 203, glutamate 325, and 355–358 each bind ATP; that span reads GGDT.

The protein belongs to the phosphoglycerate kinase family. As to quaternary structure, monomer.

Its subcellular location is the cytoplasm. The catalysed reaction is (2R)-3-phosphoglycerate + ATP = (2R)-3-phospho-glyceroyl phosphate + ADP. Its pathway is carbohydrate degradation; glycolysis; pyruvate from D-glyceraldehyde 3-phosphate: step 2/5. In Methylorubrum extorquens (strain PA1) (Methylobacterium extorquens), this protein is Phosphoglycerate kinase.